We begin with the raw amino-acid sequence, 367 residues long: MNKNKKIVVGMSGGVDSSVTALLLKQQGYDVVGLFMRNWEYGIKGSQCPNRIEFEDAKKVGALIGIEVRGKDFVKEYRDRVFDVFLEGLKQGLTPNPDILCNKEIKFNVFLNEAKSMGADMIATGHYAKIAKYKDHFVLDTPKDNTKDQSYFLHALSSEQLSHAMFPLGDLTKKEVREIARAHNLPVSDKKDSTGICFIGNQKFDEFITQHLQAIPGDILDENGKVIGKHKGLVCYTLGQRKGIGLGGIKGNESENNTHKPWFVASKDVVNNTLTIVQDTNHPLLMSKTVEASHMHWVLEEAPKVGDKLMAQVRYRQQKQACTVVEANEEKVVVEFDNPQRAVTLGQSLVLYSGDYCLGGGFISFYK.

ATP is bound by residues 10–17 (GMSGGVDS) and M36. The interval 96–98 (NPD) is interaction with target base in tRNA. Catalysis depends on C101, which acts as the Nucleophile. C101 and C197 are joined by a disulfide. Residue G125 participates in ATP binding. An interaction with tRNA region spans residues 147–149 (KDQ). C197 serves as the catalytic Cysteine persulfide intermediate. The tract at residues 314–315 (RY) is interaction with tRNA.

This sequence belongs to the MnmA/TRMU family.

It localises to the cytoplasm. It carries out the reaction S-sulfanyl-L-cysteinyl-[protein] + uridine(34) in tRNA + AH2 + ATP = 2-thiouridine(34) in tRNA + L-cysteinyl-[protein] + A + AMP + diphosphate + H(+). Its function is as follows. Catalyzes the 2-thiolation of uridine at the wobble position (U34) of tRNA, leading to the formation of s(2)U34. This Aliarcobacter butzleri (strain RM4018) (Arcobacter butzleri) protein is tRNA-specific 2-thiouridylase MnmA 2.